The sequence spans 354 residues: MMVEMDYAKKMQKCHEYVEALEEEQKKIQVFQRELPLCLELVTQAIEACRKELSGTTTTTSEQCSEQTTSVCGGPVFEEFIPIKKISSLCEEVQEEEEEDGEHESSPELVNNKKSDWLRSVQLWNHSPDLNPKEERVAKKAKVVEVKPKSGAFQPFQKRVLETDLQPAVKVASSMPATTTSSTTETCGGKSDLIKAGDEERRIEQQQSQSHTHRKQRRCWSPELHRRFLNALQQLGGSHVATPKQIRDHMKVDGLTNDEVKSHLQKYRLHTRRPAATSVAAQSTGNQQQPQFVVVGGIWVPSSQDFPPPSDVANKGGVYAPVAVAQSPKRSLERSCNSPAASSSTNTNTSTPVS.

Residues 93-102 (VQEEEEEDGE) show a composition bias toward acidic residues. Residues 93–112 (VQEEEEEDGEHESSPELVNN) are disordered. Basic and acidic residues predominate over residues 103–112 (HESSPELVNN). The HTH myb-type domain maps to 212–272 (THRKQRRCWS…HLQKYRLHTR (61 aa)). The H-T-H motif DNA-binding region spans 243 to 268 (PKQIRDHMKVDGLTNDEVKSHLQKYR). The segment at 324–354 (VAQSPKRSLERSCNSPAASSSTNTNTSTPVS) is disordered. The segment covering 337–354 (NSPAASSSTNTNTSTPVS) has biased composition (low complexity).

It is found in the nucleus. Probable transcription factor involved in phosphate homeostasis. Involved in the regulation of the developmental response of lateral roots, acquisition and/or mobilization of phosphate and expression of a subset of genes involved in phosphate sensing and signaling pathway. Is a target of the transcription factor PHR1. The sequence is that of Transcription factor HHO2 from Arabidopsis thaliana (Mouse-ear cress).